A 274-amino-acid chain; its full sequence is Glutamate--cysteine ligase regulatory subunit (274 aa).

Position 59 is a phosphoserine (S59). K263 is subject to N6-acetyllysine.

It belongs to the aldo/keto reductase family. Glutamate--cysteine ligase light chain subfamily. As to quaternary structure, heterodimer of a catalytic heavy chain and a regulatory light chain.

Its pathway is sulfur metabolism; glutathione biosynthesis; glutathione from L-cysteine and L-glutamate: step 1/2. This Bos taurus (Bovine) protein is Glutamate--cysteine ligase regulatory subunit (GCLM).